We begin with the raw amino-acid sequence, 150 residues long: Large ribosomal subunit protein bL9 (150 aa).

The protein belongs to the bacterial ribosomal protein bL9 family.

Functionally, binds to the 23S rRNA. This chain is Large ribosomal subunit protein bL9, found in Vibrio atlanticus (strain LGP32) (Vibrio splendidus (strain Mel32)).